Consider the following 114-residue polypeptide: Translation initiation factor 1A (114 aa).

The 73-residue stretch at 19–91 (SEFRLPGEGE…EKGDIVHKYE (73 aa)) folds into the S1-like domain.

The protein belongs to the eIF-1A family.

Its function is as follows. Seems to be required for maximal rate of protein biosynthesis. Enhances ribosome dissociation into subunits and stabilizes the binding of the initiator Met-tRNA(I) to 40 S ribosomal subunits. This Pyrobaculum aerophilum (strain ATCC 51768 / DSM 7523 / JCM 9630 / CIP 104966 / NBRC 100827 / IM2) protein is Translation initiation factor 1A (eIF1A).